A 283-amino-acid polypeptide reads, in one-letter code: BTB/POZ domain-containing protein KCTD15 (283 aa).

The segment at 1-32 is disordered; sequence MPHRKERPSGSSLHTHGSTGTAEGGNMSRLSL. Positions 9–21 are enriched in low complexity; that stretch reads SGSSLHTHGSTGT. Phosphoserine is present on residues serine 31, serine 35, and serine 38. One can recognise a BTB domain in the interval 56–126; that stretch reads APVHIDVGGH…LRTSKLLLPD (71 aa).

As to quaternary structure, forms oligomers, predominantly homopentamers. Interacts with KCTD1, probably forming heteropentamers depending on its abundance in a cell-type dependent manner. Interacts with TFAP2A; this interaction inhibits TFAP2A transcriptional activation.

Its subcellular location is the nucleus. Functionally, during embryonic development, it is involved in neural crest formation. Inhibits AP2 transcriptional activity by interaction with its activation domain. This Homo sapiens (Human) protein is BTB/POZ domain-containing protein KCTD15 (KCTD15).